The primary structure comprises 427 residues: Kallistatin (427 aa).

Residues 1–20 (MHLIDYLLLLLVGLLALSHG) form the signal peptide. Residues Asn33, Asn108, Asn157, and Asn238 are each glycosylated (N-linked (GlcNAc...) asparagine).

Belongs to the serpin family. In terms of assembly, monomer and some homodimers.

The protein resides in the secreted. In terms of biological role, inhibits human amidolytic and kininogenase activities of tissue kallikrein. This Pongo abelii (Sumatran orangutan) protein is Kallistatin (SERPINA4).